Here is a 458-residue protein sequence, read N- to C-terminus: Retinoic acid receptor alpha (458 aa).

A modulating region spans residues 1–86 (MASNGGSCPS…PPPLPRIYKP (86 aa)). Over residues 54–68 (TPSPATIETQSTSSE) the composition is skewed to polar residues. Residues 54-76 (TPSPATIETQSTSSEEIVPSPPS) are disordered. NR C4-type zinc fingers lie at residues 87 to 107 (CFVC…CEGC) and 123 to 147 (CHRD…LQKC). Residues 87–152 (CFVCQDKSSG…RLQKCFEVGM (66 aa)) constitute a DNA-binding region (nuclear receptor). The interval 153-182 (SKESVRNDRNKKKKQEAPKQECTESYIITP) is hinge. One can recognise an NR LBD domain in the interval 183 to 417 (EVEDLVEKVR…PLIQEMLENS (235 aa)). The 9aaTAD signature appears at 408–416 (PLIQEMLEN). The tract at residues 417-458 (SEGLDSLTGQPPRASSLAPPPGSCSPSLSPSSNRSSPTSHSP) is disordered. Low complexity predominate over residues 440–458 (CSPSLSPSSNRSSPTSHSP).

This sequence belongs to the nuclear hormone receptor family. NR1 subfamily. As to quaternary structure, heterodimer; with an rxr molecule. Binds DNA preferentially as a rar/rxr heterodimer. Expressed in forelimb, in the distal forelimb blastema, kidney, liver and hindlimb blastemal mesenchymal cells.

Its subcellular location is the nucleus. Receptor for retinoic acid. Retinoic acid receptors bind as heterodimers to their target response elements in response to their ligands, all-trans or 9-cis retinoic acid, and regulate gene expression in various biological processes. The rar/rxr heterodimers bind to the retinoic acid response elements (RARE) composed of tandem 5'-AGGTCA-3' sites known as DR1-DR5. Retinoic acid signaling appears to be involved in specifying proximal-distal axis in limb regeneration. The protein is Retinoic acid receptor alpha (RARA) of Notophthalmus viridescens (Eastern newt).